The following is a 183-amino-acid chain: Ribosome rescue factor SmrB (183 aa).

In terms of domain architecture, Smr spans 98–173 (LDLHGLTQQQ…GDAALLVLIE (76 aa)).

The protein belongs to the SmrB family. In terms of assembly, associates with collided ribosomes, but not with correctly translating polysomes.

Functionally, acts as a ribosome collision sensor. Detects stalled/collided disomes (pairs of ribosomes where the leading ribosome is stalled and a second ribosome has collided with it) and endonucleolytically cleaves mRNA at the 5' boundary of the stalled ribosome. Stalled/collided disomes form a new interface (primarily via the 30S subunits) that binds SmrB. Cleaved mRNA becomes available for tmRNA ligation, leading to ribosomal subunit dissociation and rescue of stalled ribosomes. The sequence is that of Ribosome rescue factor SmrB from Klebsiella pneumoniae (strain 342).